The following is a 237-amino-acid chain: Demethylmenaquinone methyltransferase (237 aa).

S-adenosyl-L-methionine is bound by residues threonine 58, aspartate 79, and 106–107; that span reads NA.

It belongs to the class I-like SAM-binding methyltransferase superfamily. MenG/UbiE family.

It carries out the reaction a 2-demethylmenaquinol + S-adenosyl-L-methionine = a menaquinol + S-adenosyl-L-homocysteine + H(+). The protein operates within quinol/quinone metabolism; menaquinone biosynthesis; menaquinol from 1,4-dihydroxy-2-naphthoate: step 2/2. In terms of biological role, methyltransferase required for the conversion of demethylmenaquinol (DMKH2) to menaquinol (MKH2). The sequence is that of Demethylmenaquinone methyltransferase from Listeria monocytogenes serotype 4a (strain HCC23).